The sequence spans 136 residues: Large ribosomal subunit protein uL16 (136 aa).

The protein belongs to the universal ribosomal protein uL16 family. Part of the 50S ribosomal subunit.

Functionally, binds 23S rRNA and is also seen to make contacts with the A and possibly P site tRNAs. The protein is Large ribosomal subunit protein uL16 of Pasteurella multocida (strain Pm70).